The chain runs to 229 residues: Biosynthetic peptidoglycan transglycosylase (229 aa).

A helical transmembrane segment spans residues 11–31 (NLLLALFLVLVAGPVVAVILY).

It belongs to the glycosyltransferase 51 family.

It is found in the cell inner membrane. It carries out the reaction [GlcNAc-(1-&gt;4)-Mur2Ac(oyl-L-Ala-gamma-D-Glu-L-Lys-D-Ala-D-Ala)](n)-di-trans,octa-cis-undecaprenyl diphosphate + beta-D-GlcNAc-(1-&gt;4)-Mur2Ac(oyl-L-Ala-gamma-D-Glu-L-Lys-D-Ala-D-Ala)-di-trans,octa-cis-undecaprenyl diphosphate = [GlcNAc-(1-&gt;4)-Mur2Ac(oyl-L-Ala-gamma-D-Glu-L-Lys-D-Ala-D-Ala)](n+1)-di-trans,octa-cis-undecaprenyl diphosphate + di-trans,octa-cis-undecaprenyl diphosphate + H(+). The protein operates within cell wall biogenesis; peptidoglycan biosynthesis. Functionally, peptidoglycan polymerase that catalyzes glycan chain elongation from lipid-linked precursors. This chain is Biosynthetic peptidoglycan transglycosylase, found in Caulobacter vibrioides (strain ATCC 19089 / CIP 103742 / CB 15) (Caulobacter crescentus).